The chain runs to 694 residues: Polyribonucleotide nucleotidyltransferase (694 aa).

Mg(2+) is bound by residues D485 and D491. The 60-residue stretch at 552 to 611 folds into the KH domain; it reads PRIETMQIKPNKIATVIGPGGKQIRQIIEEAGVQIDINDSGLVSISASSPQAIEKAKSMI. Residues 621–689 form the S1 motif domain; sequence GKIYEGRVTS…EKGQYKLSHK (69 aa).

This sequence belongs to the polyribonucleotide nucleotidyltransferase family. Mg(2+) is required as a cofactor.

Its subcellular location is the cytoplasm. The catalysed reaction is RNA(n+1) + phosphate = RNA(n) + a ribonucleoside 5'-diphosphate. Its function is as follows. Involved in mRNA degradation. Catalyzes the phosphorolysis of single-stranded polyribonucleotides processively in the 3'- to 5'-direction. The protein is Polyribonucleotide nucleotidyltransferase of Chlamydia caviae (strain ATCC VR-813 / DSM 19441 / 03DC25 / GPIC) (Chlamydophila caviae).